A 337-amino-acid chain; its full sequence is Pyridoxal 5'-phosphate synthase subunit PdxS (337 aa).

Position 63 (Asp-63) interacts with D-ribose 5-phosphate. Lys-120 (schiff-base intermediate with D-ribose 5-phosphate) is an active-site residue. Gly-192 is a D-ribose 5-phosphate binding site. Position 204 (Lys-204) interacts with D-glyceraldehyde 3-phosphate. D-ribose 5-phosphate contacts are provided by residues Gly-253 and 274 to 275 (GS).

The protein belongs to the PdxS/SNZ family. In terms of assembly, in the presence of PdxT, forms a dodecamer of heterodimers.

The catalysed reaction is aldehydo-D-ribose 5-phosphate + D-glyceraldehyde 3-phosphate + L-glutamine = pyridoxal 5'-phosphate + L-glutamate + phosphate + 3 H2O + H(+). It functions in the pathway cofactor biosynthesis; pyridoxal 5'-phosphate biosynthesis. In terms of biological role, catalyzes the formation of pyridoxal 5'-phosphate from ribose 5-phosphate (RBP), glyceraldehyde 3-phosphate (G3P) and ammonia. The ammonia is provided by the PdxT subunit. Can also use ribulose 5-phosphate and dihydroxyacetone phosphate as substrates, resulting from enzyme-catalyzed isomerization of RBP and G3P, respectively. The protein is Pyridoxal 5'-phosphate synthase subunit PdxS of Aeropyrum pernix (strain ATCC 700893 / DSM 11879 / JCM 9820 / NBRC 100138 / K1).